The chain runs to 602 residues: Myotubularin (602 aa).

A disordered region spans residues 1 to 40 (MASSSASDCDAHPVERESMRKVSQDGVRQDMSKSGPRLPG). The span at 9–31 (CDAHPVERESMRKVSQDGVRQDM) shows a compositional bias: basic and acidic residues. Phosphoserine is present on S18. The GRAM domain maps to 28-97 (RQDMSKSGPR…GVISRIEKMG (70 aa)). One can recognise a Myotubularin phosphatase domain in the interval 163–538 (GWAIYNPVEE…RHLELWVNYY (376 aa)). A 1,2-diacyl-sn-glycero-3-phospho-(1D-myo-inositol-3,5-bisphosphate) contacts are provided by N288, N313, and I314. Residues N288, N313, and I314 each contribute to the a 1,2-diacyl-sn-glycero-3-phospho-(1D-myo-inositol-3-phosphate) site. The active-site Phosphocysteine intermediate is the C375. A 1,2-diacyl-sn-glycero-3-phospho-(1D-myo-inositol-3,5-bisphosphate) contacts are provided by S376, D377, G378, W379, D380, R381, K417, and R421. Residues S376, D377, G378, W379, D380, and R381 each coordinate a 1,2-diacyl-sn-glycero-3-phospho-(1D-myo-inositol-3-phosphate). Residue R421 coordinates a 1,2-diacyl-sn-glycero-3-phospho-(1D-myo-inositol-3-phosphate). At T495 the chain carries Phosphothreonine. A compositionally biased stretch (polar residues) spans 578–592 (PTKLTDSSTPPSGSA). The disordered stretch occupies residues 578–602 (PTKLTDSSTPPSGSAQIAPRMQTHF).

This sequence belongs to the protein-tyrosine phosphatase family. Non-receptor class myotubularin subfamily. Heterodimer with MTMR12. Interacts with KMT2A/MLL1 (via SET domain). Interacts with DES in skeletal muscle but not in cardiac muscle. Interacts with SPEG.

Its subcellular location is the cytoplasm. The protein resides in the cell membrane. It is found in the cell projection. It localises to the filopodium. The protein localises to the ruffle. Its subcellular location is the late endosome. The protein resides in the myofibril. It is found in the sarcomere. It catalyses the reaction a 1,2-diacyl-sn-glycero-3-phospho-(1D-myo-inositol-3-phosphate) + H2O = a 1,2-diacyl-sn-glycero-3-phospho-(1D-myo-inositol) + phosphate. The enzyme catalyses a 1,2-diacyl-sn-glycero-3-phospho-(1D-myo-inositol-3,5-bisphosphate) + H2O = a 1,2-diacyl-sn-glycero-3-phospho-(1D-myo-inositol-5-phosphate) + phosphate. The catalysed reaction is 1,2-dioctanoyl-sn-glycero-3-phospho-(1-D-myo-inositol-3-phosphate) + H2O = 1,2-dioctanoyl-sn-glycero-3-phospho-(1D-myo-inositol) + phosphate. It carries out the reaction 1,2-dioctanoyl-sn-glycero-3-phospho-(1D-myo-inositol-3,5-bisphosphate) + H2O = 1,2-dioctanoyl-sn-glycero-3-phospho-(1D-myo-inositol-5-phosphate) + phosphate. It catalyses the reaction 1,2-dihexadecanoyl-sn-glycero-3-phospho-(1D-myo-inositol-3,5-phosphate) + H2O = 1,2-dihexadecanoyl-sn-glycero-3-phospho-(1D-myo-inositol-5-phosphate) + phosphate. With respect to regulation, allosterically activated by phosphatidylinositol 5-phosphate (PI5P). Its function is as follows. Lipid phosphatase which dephosphorylates phosphatidylinositol 3-monophosphate (PI3P) and phosphatidylinositol 3,5-bisphosphate (PI(3,5)P2). Has also been shown to dephosphorylate phosphotyrosine- and phosphoserine-containing peptides. Negatively regulates EGFR degradation through regulation of EGFR trafficking from the late endosome to the lysosome. Plays a role in vacuolar formation and morphology. Regulates desmin intermediate filament assembly and architecture. Plays a role in mitochondrial morphology and positioning. Required for skeletal muscle maintenance but not for myogenesis. In skeletal muscles, stabilizes MTMR12 protein levels. In Rattus norvegicus (Rat), this protein is Myotubularin.